We begin with the raw amino-acid sequence, 747 residues long: Polyribonucleotide nucleotidyltransferase (747 aa).

Mg(2+) is bound by residues Asp487 and Asp493. Residues 554 to 613 (PSTTTIKIDKDKIRDIIGPGGKVIKEICETSGAKIDISDDGSVSVYASDRDKLKVALDKI) form the KH domain. In terms of domain architecture, S1 motif spans 623–691 (GEIFNGTVMK…NKGKAKLTIK (69 aa)). Residues 691–747 (KNADKDKSSNNPKPKNNVNNAKENSEPERRDSSKKRAWNEDSNNDKEEAITERKYFN) form a disordered region. Positions 699–712 (SNNPKPKNNVNNAK) are enriched in low complexity. Basic and acidic residues predominate over residues 727–747 (AWNEDSNNDKEEAITERKYFN).

Belongs to the polyribonucleotide nucleotidyltransferase family. Mg(2+) is required as a cofactor.

It is found in the cytoplasm. It catalyses the reaction RNA(n+1) + phosphate = RNA(n) + a ribonucleoside 5'-diphosphate. Functionally, involved in mRNA degradation. Catalyzes the phosphorolysis of single-stranded polyribonucleotides processively in the 3'- to 5'-direction. The chain is Polyribonucleotide nucleotidyltransferase from Rickettsia felis (strain ATCC VR-1525 / URRWXCal2) (Rickettsia azadi).